The sequence spans 311 residues: tRNA-cytidine(32) 2-sulfurtransferase (311 aa).

Residues 47 to 52 (SGGKDS) carry the PP-loop motif motif. Residues C122, C125, and C213 each contribute to the [4Fe-4S] cluster site.

This sequence belongs to the TtcA family. In terms of assembly, homodimer. The cofactor is Mg(2+). It depends on [4Fe-4S] cluster as a cofactor.

It localises to the cytoplasm. It carries out the reaction cytidine(32) in tRNA + S-sulfanyl-L-cysteinyl-[cysteine desulfurase] + AH2 + ATP = 2-thiocytidine(32) in tRNA + L-cysteinyl-[cysteine desulfurase] + A + AMP + diphosphate + H(+). The protein operates within tRNA modification. In terms of biological role, catalyzes the ATP-dependent 2-thiolation of cytidine in position 32 of tRNA, to form 2-thiocytidine (s(2)C32). The sulfur atoms are provided by the cysteine/cysteine desulfurase (IscS) system. The protein is tRNA-cytidine(32) 2-sulfurtransferase of Escherichia coli (strain K12 / MC4100 / BW2952).